The chain runs to 122 residues: Ubiquitin-related modifier 1 (122 aa).

Residues 33–48 show a composition bias toward polar residues; sequence PSTVPADNNTSVTTKD. A disordered region spans residues 33 to 52; sequence PSTVPADNNTSVTTKDAASP. G122 is subject to 1-thioglycine. Residue G122 forms a Glycyl lysine isopeptide (Gly-Lys) (interchain with K-? in acceptor proteins) linkage.

Belongs to the URM1 family. In terms of processing, C-terminal thiocarboxylation occurs in 2 steps, it is first acyl-adenylated (-COAMP) via the hesA/moeB/thiF part of UBA4, then thiocarboxylated (-COSH) via the rhodanese domain of UBA4.

Its subcellular location is the cytoplasm. The protein operates within tRNA modification; 5-methoxycarbonylmethyl-2-thiouridine-tRNA biosynthesis. Functionally, acts as a sulfur carrier required for 2-thiolation of mcm(5)S(2)U at tRNA wobble positions of cytosolic tRNA(Lys), tRNA(Glu) and tRNA(Gln). Serves as sulfur donor in tRNA 2-thiolation reaction by being thiocarboxylated (-COSH) at its C-terminus by the MOCS3 homolog UBA4. The sulfur is then transferred to tRNA to form 2-thiolation of mcm(5)S(2)U. Prior mcm(5) tRNA modification by the elongator complex is required for 2-thiolation. Also acts as a ubiquitin-like protein (UBL) that is covalently conjugated via an isopeptide bond to lysine residues of target proteins such as AHP1. The thiocarboxylated form serves as substrate for conjugation and oxidative stress specifically induces the formation of UBL-protein conjugates. This chain is Ubiquitin-related modifier 1, found in Laccaria bicolor (strain S238N-H82 / ATCC MYA-4686) (Bicoloured deceiver).